The chain runs to 571 residues: Transcription factor ABORTED MICROSPORES (571 aa).

The span at 275-284 shows a compositional bias: basic and acidic residues; sequence NDKDMNENGR. Disordered stretches follow at residues 275–321, 365–390, and 536–571; these read NDKD…AERR, ELQDELEENSETEDGSNRPQGGMSLN, and DDHQHHNGHHHPFDHQMNQSAHHHHHHQHINHYHNQ. The bHLH domain occupies 310-359; that stretch reads GSQAKNLMAERRRRKKLNDRLYALRSLVPRITKLDRASILGDAINYVKEL. Residues 368 to 378 show a composition bias toward acidic residues; sequence DELEENSETED. Positions 381-390 are enriched in polar residues; sequence NRPQGGMSLN. Basic residues predominate over residues 556–571; that stretch reads AHHHHHHQHINHYHNQ.

As to quaternary structure, homodimer. Interacts with ASHR3. As to expression, mostly expressed in closed, post-meiotic buds, and, to a lower extent, in pre-meiotic buds. Detected in leaves, stems, and flowers.

The protein localises to the nucleus. Transcription factor. Plays a crucial role in tapetum development. Required for male fertility and pollen differentiation, especially during the post-meiotic transcriptional regulation of microspore development within the developing anther. Binds E-box regions in the AHL16/TEK promoter. This is Transcription factor ABORTED MICROSPORES (AMS) from Arabidopsis thaliana (Mouse-ear cress).